Here is a 511-residue protein sequence, read N- to C-terminus: Phosphoenolpyruvate carboxylase (511 aa).

This sequence belongs to the PEPCase type 2 family. In terms of assembly, homotetramer. Mg(2+) is required as a cofactor.

The catalysed reaction is oxaloacetate + phosphate = phosphoenolpyruvate + hydrogencarbonate. With respect to regulation, allosterically inhibited by L-aspartate and L-malate. PEPC activity is not affected by allosteric activators of E.coli PEPC such as glucose 6-phosphate, fructose 1,6-bisphosphate, and acetyl coenzyme A. In terms of biological role, catalyzes the irreversible beta-carboxylation of phosphoenolpyruvate (PEP) to form oxaloacetate (OAA), a four-carbon dicarboxylic acid source for the tricarboxylic acid cycle. The protein is Phosphoenolpyruvate carboxylase of Saccharolobus solfataricus (strain ATCC 35092 / DSM 1617 / JCM 11322 / P2) (Sulfolobus solfataricus).